We begin with the raw amino-acid sequence, 509 residues long: Steroid 17-alpha-hydroxylase/17,20 lyase (509 aa).

A substrate-binding site is contributed by Asn202. Cys442 contacts heme.

Belongs to the cytochrome P450 family. Heme is required as a cofactor.

It is found in the endoplasmic reticulum membrane. The protein resides in the microsome membrane. It catalyses the reaction a C21-steroid + reduced [NADPH--hemoprotein reductase] + O2 = a 17alpha-hydroxy-C21-steroid + oxidized [NADPH--hemoprotein reductase] + H2O + H(+). It carries out the reaction progesterone + reduced [NADPH--hemoprotein reductase] + O2 = 17alpha-hydroxyprogesterone + oxidized [NADPH--hemoprotein reductase] + H2O + H(+). The enzyme catalyses pregnenolone + reduced [NADPH--hemoprotein reductase] + O2 = 17alpha-hydroxypregnenolone + oxidized [NADPH--hemoprotein reductase] + H2O + H(+). The catalysed reaction is 17alpha-hydroxyprogesterone + reduced [NADPH--hemoprotein reductase] + O2 = androst-4-ene-3,17-dione + acetate + oxidized [NADPH--hemoprotein reductase] + H2O + 2 H(+). It catalyses the reaction 17alpha-hydroxyprogesterone + reduced [NADPH--hemoprotein reductase] + O2 = 16alpha,17alpha-dihydroxyprogesterone + oxidized [NADPH--hemoprotein reductase] + H2O + H(+). It carries out the reaction 16alpha,17alpha-dihydroxyprogesterone + reduced [NADPH--hemoprotein reductase] + O2 = 6beta,16alpha,17alpha-trihydroxyprogesterone + oxidized [NADPH--hemoprotein reductase] + H2O + H(+). The enzyme catalyses 17alpha-hydroxypregnenolone + reduced [NADPH--hemoprotein reductase] + O2 = 3beta-hydroxyandrost-5-en-17-one + acetate + oxidized [NADPH--hemoprotein reductase] + H2O + 2 H(+). The catalysed reaction is 16alpha,17alpha-dihydroxypregnenolone + reduced [NADPH--hemoprotein reductase] + O2 = 3beta,16alpha-dihydroxy-androst-5-en-17-one + acetate + oxidized [NADPH--hemoprotein reductase] + H2O + 2 H(+). It catalyses the reaction 3beta-hydroxyandrost-5-en-17-one + reduced [NADPH--hemoprotein reductase] + O2 = 3beta,16alpha-dihydroxy-androst-5-en-17-one + oxidized [NADPH--hemoprotein reductase] + H2O + H(+). It carries out the reaction androst-4-ene-3,17-dione + reduced [NADPH--hemoprotein reductase] + O2 = 16alpha-hydroxyandrost-4-ene-3,17-dione + oxidized [NADPH--hemoprotein reductase] + H2O + H(+). It functions in the pathway steroid hormone biosynthesis. It participates in steroid biosynthesis; glucocorticoid biosynthesis. Regulated predominantly by intracellular cAMP levels. The 17,20-lyase activity is stimulated by cytochrome b5, which acts as an allosteric effector increasing the Vmax of the lyase activity. In terms of biological role, a cytochrome P450 monooxygenase involved in corticoid and androgen biosynthesis. Catalyzes 17-alpha hydroxylation of C21 steroids, which is common for both pathways. A second oxidative step, required only for androgen synthesis, involves an acyl-carbon cleavage. The 17-alpha hydroxy intermediates, as part of adrenal glucocorticoids biosynthesis pathway, are precursors of cortisol. Hydroxylates steroid hormones, pregnenolone and progesterone to form 17-alpha hydroxy metabolites, followed by the cleavage of the C17-C20 bond to form C19 steroids, dehydroepiandrosterone (DHEA) and androstenedione. Has 16-alpha hydroxylase activity. Catalyzes 16-alpha hydroxylation of 17-alpha hydroxy pregnenolone, followed by the cleavage of the C17-C20 bond to form 16-alpha-hydroxy DHEA. Also 16-alpha hydroxylates androgens, relevant for estriol synthesis. Mechanistically, uses molecular oxygen inserting one oxygen atom into a substrate, and reducing the second into a water molecule, with two electrons provided by NADPH via cytochrome P450 reductase (CPR; NADPH-ferrihemoprotein reductase). The chain is Steroid 17-alpha-hydroxylase/17,20 lyase (CYP17A1) from Ovis aries (Sheep).